The primary structure comprises 516 residues: Multicopper oxidase CueO (516 aa).

Residues 1 to 28 constitute a signal peptide (tat-type signal); it reads MQRRDFLKYSVALGVASALPLWSRAVFA. Plastocyanin-like domains follow at residues 55 to 165 and 227 to 292; these read GQST…IEDD and PRGW…DNKP. Residues His-101, His-103, His-141, and His-143 each contribute to the Cu cation site. Residues 355-400 are methionine-rich region; it reads MDPMLDMMGMQMLMEKYGDQAMAGMDHSQMMGHMGHGNMNHMNHGG. A Plastocyanin-like 3 domain is found at 402–516; sequence FDFHHANKIN…DTGMMLGFTV (115 aa). Residues His-443, His-446, His-448, His-499, Cys-500, His-501, and His-505 each coordinate Cu cation.

Belongs to the multicopper oxidase family. In terms of assembly, monomer. The cofactor is Cu cation. Post-translationally, exported by the Tat system. The position of the signal peptide cleavage has been experimentally proven.

It localises to the periplasm. It catalyses the reaction 4 Cu(+) + O2 + 4 H(+) = 4 Cu(2+) + 2 H2O. Ferroxidase and phenoloxidase activities are enhanced considerably in the presence of excess copper ions. A labile regulatory copper ion near the T1 copper site is important for the copper associated activation of enzyme activity. Ag(+) acts as a potent inhibitor of oxidase activity by binding at Cu(+) binding sites, blocking Cu(+) substrate binding and oxidation. pPD oxidase activity is strongly inhibited by sodium azide, an inhibitor of the electron transfer. Multicopper oxidase involved in copper homeostasis and copper tolerance under aerobic conditions. Is responsible for the oxidation of Cu(+) to the less harmful Cu(2+) in the periplasm, thereby preventing Cu(+) from entering the cytoplasm. Probably primarily functions as a cuprous oxidase in vivo. In terms of biological role, in vitro, in the presence of excess copper ions, exhibits ferroxidase and phenoloxidase activities. Fe(2+) is an excellent substrate in the presence of excess Cu(2+), but is inactive in the absence of Cu(2+). Oxidizes the phenolate iron siderophores enterobactin, 2,3-dihydroxybenzoate (2,3-DHB) and 3-hydroxyanthranilate (3-HAA). Oxidation and thus inactivation of enterobactin could protect cells from the interaction of enterobactin with copper and play a central role as an interface between copper detoxification and iron homeostasis. Also oxidizes a variety of phenolic model substrates, including 2,2'-azinobis(3-ethylbenzthiazolinesulfonic acid) (ABTS), p-phenylenediamine (pPD), 2,6-dimethoxyphenol (2,6-DMP) and 3,4-dihydroxybenzoic acid (3,4-DHB). This chain is Multicopper oxidase CueO, found in Escherichia coli (strain K12).